The sequence spans 150 residues: Geranyl diphosphate phosphohydrolase (150 aa).

The Nudix hydrolase domain occupies S14–P147. The Nudix box motif lies at G48–D69. Mg(2+) contacts are provided by E63 and E67.

Belongs to the Nudix hydrolase family. In terms of tissue distribution, expressed in petals. Little or no expression in stamens, sepals or young leaves.

It localises to the cytoplasm. It carries out the reaction (2E)-geranyl diphosphate + H2O = (2E)-geranyl phosphate + phosphate + H(+). Its function is as follows. Involved in a cytosolic pathway for the biosynthesis of free monoterpene alcohols that contribute to fragrance. Lacks terpene synthase activity, but has a diphosphohydrolase activity with geranyl diphosphate and farnesyl diphosphate as substrates. No activity with 8-oxo-dGTP and dGTP and unable to dephosphorylate geranyl phosphate to geraniol. This chain is Geranyl diphosphate phosphohydrolase, found in Rosa hybrid cultivar.